Consider the following 306-residue polypeptide: ATP phosphoribosyltransferase (306 aa).

The protein belongs to the ATP phosphoribosyltransferase family.

Its subcellular location is the cytoplasm. The catalysed reaction is 1-(5-phospho-beta-D-ribosyl)-ATP + diphosphate = 5-phospho-alpha-D-ribose 1-diphosphate + ATP. It functions in the pathway amino-acid biosynthesis; L-histidine biosynthesis; L-histidine from 5-phospho-alpha-D-ribose 1-diphosphate: step 1/9. Its function is as follows. Catalyzes the condensation of ATP and 5-phosphoribose 1-diphosphate to form N'-(5'-phosphoribosyl)-ATP (PR-ATP). Has a crucial role in the pathway because the rate of histidine biosynthesis seems to be controlled primarily by regulation of the enzymatic activity. The protein is ATP phosphoribosyltransferase (HIS1) of Candida glabrata (strain ATCC 2001 / BCRC 20586 / JCM 3761 / NBRC 0622 / NRRL Y-65 / CBS 138) (Yeast).